Here is a 337-residue protein sequence, read N- to C-terminus: Protein OPG055 (337 aa).

This sequence belongs to the orthopoxvirus OPG055 family.

Functionally, stimulates increases in peripheral microtubule dynamics and may increase the motility of the infected cells, contributing to cell-to-cell spread of the virus. Seems to inhibit the signaling via the GTPase RHOA and DIAPH1/mDia. In Homo sapiens (Human), this protein is Protein OPG055 (OPG055).